Reading from the N-terminus, the 79-residue chain is Acyl carrier protein (79 aa).

The Carrier domain maps to 3 to 78 (QEILEKVCSI…DAVKFIEEKK (76 aa)). Ser38 carries the O-(pantetheine 4'-phosphoryl)serine modification.

Belongs to the acyl carrier protein (ACP) family. 4'-phosphopantetheine is transferred from CoA to a specific serine of apo-ACP by AcpS. This modification is essential for activity because fatty acids are bound in thioester linkage to the sulfhydryl of the prosthetic group.

It is found in the cytoplasm. Its pathway is lipid metabolism; fatty acid biosynthesis. Its function is as follows. Carrier of the growing fatty acid chain in fatty acid biosynthesis. This chain is Acyl carrier protein, found in Prochlorococcus marinus (strain MIT 9312).